The following is a 351-amino-acid chain: Biotin synthase (351 aa).

Positions Pro73–Arg298 constitute a Radical SAM core domain. Residues Cys88, Cys92, and Cys95 each contribute to the [4Fe-4S] cluster site. Cys131, Cys164, Cys223, and Arg293 together coordinate [2Fe-2S] cluster.

This sequence belongs to the radical SAM superfamily. Biotin synthase family. In terms of assembly, homodimer. Requires [4Fe-4S] cluster as cofactor. The cofactor is [2Fe-2S] cluster.

The catalysed reaction is (4R,5S)-dethiobiotin + (sulfur carrier)-SH + 2 reduced [2Fe-2S]-[ferredoxin] + 2 S-adenosyl-L-methionine = (sulfur carrier)-H + biotin + 2 5'-deoxyadenosine + 2 L-methionine + 2 oxidized [2Fe-2S]-[ferredoxin]. The protein operates within cofactor biosynthesis; biotin biosynthesis; biotin from 7,8-diaminononanoate: step 2/2. In terms of biological role, catalyzes the conversion of dethiobiotin (DTB) to biotin by the insertion of a sulfur atom into dethiobiotin via a radical-based mechanism. This chain is Biotin synthase, found in Frankia alni (strain DSM 45986 / CECT 9034 / ACN14a).